The following is a 697-amino-acid chain: Elongation factor G 1 (697 aa).

The region spanning 8–283 (ERYRNFGIMA…AVVDFLPSPV (276 aa)) is the tr-type G domain. GTP-binding positions include 17–24 (AHIDAGKT), 81–85 (DTPGH), and 135–138 (NKMD).

It belongs to the TRAFAC class translation factor GTPase superfamily. Classic translation factor GTPase family. EF-G/EF-2 subfamily.

The protein localises to the cytoplasm. Functionally, catalyzes the GTP-dependent ribosomal translocation step during translation elongation. During this step, the ribosome changes from the pre-translocational (PRE) to the post-translocational (POST) state as the newly formed A-site-bound peptidyl-tRNA and P-site-bound deacylated tRNA move to the P and E sites, respectively. Catalyzes the coordinated movement of the two tRNA molecules, the mRNA and conformational changes in the ribosome. The sequence is that of Elongation factor G 1 from Anaeromyxobacter dehalogenans (strain 2CP-C).